An 877-amino-acid polypeptide reads, in one-letter code: DNA mismatch repair protein MutS (877 aa).

An ATP-binding site is contributed by 630 to 637 (GPNMAGKS).

The protein belongs to the DNA mismatch repair MutS family.

This protein is involved in the repair of mismatches in DNA. It is possible that it carries out the mismatch recognition step. This protein has a weak ATPase activity. The chain is DNA mismatch repair protein MutS from Jannaschia sp. (strain CCS1).